The following is a 395-amino-acid chain: Na(+)/H(+) antiporter NhaA (395 aa).

Transmembrane regions (helical) follow at residues Phe-15–Val-35, Ile-66–Ile-86, Val-101–Leu-121, Gly-132–Gly-152, Ala-161–Phe-181, Asn-184–Ala-204, Cys-219–Ile-239, Ala-265–Val-285, Leu-301–Leu-321, Val-339–Leu-359, and Leu-366–Trp-386.

Belongs to the NhaA Na(+)/H(+) (TC 2.A.33) antiporter family.

The protein localises to the cell inner membrane. It carries out the reaction Na(+)(in) + 2 H(+)(out) = Na(+)(out) + 2 H(+)(in). In terms of biological role, na(+)/H(+) antiporter that extrudes sodium in exchange for external protons. The protein is Na(+)/H(+) antiporter NhaA of Gluconacetobacter diazotrophicus (strain ATCC 49037 / DSM 5601 / CCUG 37298 / CIP 103539 / LMG 7603 / PAl5).